A 264-amino-acid polypeptide reads, in one-letter code: Undecaprenyl-diphosphatase (264 aa).

8 helical membrane passes run 7-27 (VVILGFIQGIAEFLPISSSGH), 39-59 (LPIVFDIYLHLATVLVVMIYY), 89-109 (ILLILIITIITAFIGIFIEMF), 112-132 (LFTLNLVLINFIVTSILLFLL), 145-165 (ILLAGCLIGTMQGIGAMPGIS), 182-202 (SESFEISFLSLIPIVFGSLLL), 212-232 (MLFSIFEINLGAIIAFLVGLF), and 244-264 (SKLYYFSVYLIILVSLVYFLF).

Belongs to the UppP family.

It is found in the cell inner membrane. The catalysed reaction is di-trans,octa-cis-undecaprenyl diphosphate + H2O = di-trans,octa-cis-undecaprenyl phosphate + phosphate + H(+). In terms of biological role, catalyzes the dephosphorylation of undecaprenyl diphosphate (UPP). Confers resistance to bacitracin. This is Undecaprenyl-diphosphatase from Borrelia hermsii (strain HS1 / DAH).